The primary structure comprises 89 residues: MDMVLAKTVVLAASAVGAGAAMIAGIGPGVGQGYAAGKAVESVARQPEAKGDIISTMVLGQAIAESTGIYSLVIALILLYANPFVGLLG.

Helical transmembrane passes span 9–29 (VVLAASAVGAGAAMIAGIGPG) and 68–88 (GIYSLVIALILLYANPFVGLL).

It belongs to the ATPase C chain family. In terms of assembly, F-type ATPases have 2 components, F(1) - the catalytic core - and F(0) - the membrane sodium channel. F(1) has five subunits: alpha(3), beta(3), gamma(1), delta(1), epsilon(1). F(0) has three main subunits: a(1), b(2) and c(10-14). The alpha and beta chains form an alternating ring which encloses part of the gamma chain. F(1) is attached to F(0) by a central stalk formed by the gamma and epsilon chains, while a peripheral stalk is formed by the delta and b chains.

Its subcellular location is the cell membrane. F(1)F(0) ATP synthase produces ATP from ADP in the presence of a proton or sodium gradient. F-type ATPases consist of two structural domains, F(1) containing the extramembraneous catalytic core and F(0) containing the membrane sodium channel, linked together by a central stalk and a peripheral stalk. During catalysis, ATP synthesis in the catalytic domain of F(1) is coupled via a rotary mechanism of the central stalk subunits to sodium translocation. Functionally, key component of the F(0) channel; it plays a direct role in translocation across the membrane. A homomeric c-ring of between 10-14 subunits forms the central stalk rotor element with the F(1) delta and epsilon subunits. The sequence is that of ATP synthase subunit c, sodium ion specific (atpE) from Propionigenium modestum.